A 130-amino-acid chain; its full sequence is Large ribosomal subunit protein eL32 (130 aa).

Position 40 is a phosphoserine (S40).

It belongs to the eukaryotic ribosomal protein eL32 family. In terms of assembly, component of the large ribosomal subunit (LSU). Mature yeast ribosomes consist of a small (40S) and a large (60S) subunit. The 40S small subunit contains 1 molecule of ribosomal RNA (18S rRNA) and 33 different proteins (encoded by 57 genes). The large 60S subunit contains 3 rRNA molecules (25S, 5.8S and 5S rRNA) and 46 different proteins (encoded by 81 genes).

Its subcellular location is the cytoplasm. Its function is as follows. Component of the ribosome, a large ribonucleoprotein complex responsible for the synthesis of proteins in the cell. The small ribosomal subunit (SSU) binds messenger RNAs (mRNAs) and translates the encoded message by selecting cognate aminoacyl-transfer RNA (tRNA) molecules. The large subunit (LSU) contains the ribosomal catalytic site termed the peptidyl transferase center (PTC), which catalyzes the formation of peptide bonds, thereby polymerizing the amino acids delivered by tRNAs into a polypeptide chain. The nascent polypeptides leave the ribosome through a tunnel in the LSU and interact with protein factors that function in enzymatic processing, targeting, and the membrane insertion of nascent chains at the exit of the ribosomal tunnel. This Saccharomyces cerevisiae (strain ATCC 204508 / S288c) (Baker's yeast) protein is Large ribosomal subunit protein eL32.